Reading from the N-terminus, the 303-residue chain is GTPase Era (303 aa).

The Era-type G domain maps to Lys9–Glu176. The tract at residues Gly17 to Ser24 is G1. Gly17 to Ser24 is a binding site for GTP. Residues Gln43–Asn47 are G2. A G3 region spans residues Asp64–Gly67. GTP contacts are provided by residues Asp64 to Ile68 and Asn126 to Asp129. Residues Asn126–Asp129 form a G4 region. Positions Ile155 to Ala157 are G5. The 86-residue stretch at Ile199–Lys284 folds into the KH type-2 domain.

This sequence belongs to the TRAFAC class TrmE-Era-EngA-EngB-Septin-like GTPase superfamily. Era GTPase family. As to quaternary structure, monomer.

It localises to the cytoplasm. The protein localises to the cell membrane. Functionally, an essential GTPase that binds both GDP and GTP, with rapid nucleotide exchange. Plays a role in 16S rRNA processing and 30S ribosomal subunit biogenesis and possibly also in cell cycle regulation and energy metabolism. The protein is GTPase Era of Shouchella clausii (strain KSM-K16) (Alkalihalobacillus clausii).